The primary structure comprises 155 residues: Ribosomal RNA large subunit methyltransferase H (155 aa).

Residues leucine 73, glycine 104, and 123–128 contribute to the S-adenosyl-L-methionine site; that span reads LSPLTL.

Belongs to the RNA methyltransferase RlmH family. As to quaternary structure, homodimer.

The protein resides in the cytoplasm. The enzyme catalyses pseudouridine(1915) in 23S rRNA + S-adenosyl-L-methionine = N(3)-methylpseudouridine(1915) in 23S rRNA + S-adenosyl-L-homocysteine + H(+). Specifically methylates the pseudouridine at position 1915 (m3Psi1915) in 23S rRNA. This Pseudomonas entomophila (strain L48) protein is Ribosomal RNA large subunit methyltransferase H.